The primary structure comprises 634 residues: Beta-ketoacyl-[acyl-carrier-protein] synthase FabY (634 aa).

Positions 78–546 constitute a Ketosynthase family 3 (KS3) domain; it reads ERIFASTLVR…GNNASGVVLS (469 aa). Active-site for beta-ketoacyl synthase activity residues include cysteine 281, histidine 434, and histidine 472.

Belongs to the thiolase-like superfamily. Beta-ketoacyl-ACP synthases family. In terms of assembly, homodimer.

It catalyses the reaction malonyl-[ACP] + acetyl-CoA + H(+) = 3-oxobutanoyl-[ACP] + CO2 + CoA. Its pathway is lipid metabolism; fatty acid biosynthesis. In terms of biological role, involved in the initiation of the fatty acid biosynthesis. Catalyzes the condensation of acetyl coenzyme A (acetyl-CoA) with malonyl-acyl carrier protein (ACP) to make the fatty acid synthesis (FAS) primer beta-acetoacetyl-ACP. It can also use short-chain acyl-CoA as substrates, including butyryl-CoA, and hexanoyl-CoA, but does not use any of the longer chain acyl-CoA substrates. This chain is Beta-ketoacyl-[acyl-carrier-protein] synthase FabY (fabY), found in Pseudomonas aeruginosa (strain ATCC 15692 / DSM 22644 / CIP 104116 / JCM 14847 / LMG 12228 / 1C / PRS 101 / PAO1).